Reading from the N-terminus, the 494-residue chain is Probable malate:quinone oxidoreductase (494 aa).

It belongs to the MQO family. FAD is required as a cofactor.

The catalysed reaction is (S)-malate + a quinone = a quinol + oxaloacetate. It functions in the pathway carbohydrate metabolism; tricarboxylic acid cycle; oxaloacetate from (S)-malate (quinone route): step 1/1. This chain is Probable malate:quinone oxidoreductase, found in Kocuria rhizophila (strain ATCC 9341 / DSM 348 / NBRC 103217 / DC2201).